The primary structure comprises 1598 residues: Transposon Ty2-LR2 Gag-Pol polyprotein (1598 aa).

Polar residues-rich tracts occupy residues 1-11 (MESQQLHQNPH), 19-39 (ASVT…SASN), and 49-60 (KVNSQEETTPGT). Disordered regions lie at residues 1–88 (MESQ…YQQH) and 359–449 (QHSE…SNDE). Residues 295-397 (ENNINVSDRL…SSKPRAAKAH (103 aa)) are RNA-binding. A compositionally biased stretch (low complexity) spans 369–381 (TSPNTTNTKVTTR). Composition is skewed to polar residues over residues 399 to 408 (IATSSKFSRV) and 415 to 435 (ESTV…GQQQ). The active-site For protease activity; shared with dimeric partner is Asp457. Positions 579-636 (NVNKSKSVNKYPYPLIHRMLGHANFRSIQKSLKKNAVTYLKESDIEWSNASTYQCPDC) are integrase-type zinc finger-like. In terms of domain architecture, Integrase catalytic spans 656–831 (ESYEPFQYLH…AGLDITTILP (176 aa)). Asp667 and Asp732 together coordinate Mg(2+). Composition is skewed to polar residues over residues 915–927 (SFIE…QSYD), 1009–1034 (ESDT…STNE), and 1065–1082 (QRNS…STPS). Disordered stretches follow at residues 915-934 (SFIE…ESDH), 1004-1034 (MGGT…STNE), 1059-1135 (TEEP…KSSK), 1146-1165 (LPLP…VSKD), and 1170-1205 (HSRQ…TEIE). The span at 1151-1165 (LTHKSPTDTSDVSKD) shows a compositional bias: basic and acidic residues. Positions 1193 to 1227 (KKRSLEDNETEIEVSRDTWNNKNMRSLEPPRSKKR) match the Bipartite nuclear localization signal motif. The 139-residue stretch at 1353 to 1491 (NDYYITQLDI…DILGLEIKYQ (139 aa)) folds into the Reverse transcriptase Ty1/copia-type domain. Asp1361, Asp1442, and Asp1443 together coordinate Mg(2+).

In terms of assembly, the capsid protein forms a homotrimer, from which the VLPs are assembled. The protease is a homodimer, whose active site consists of two apposed aspartic acid residues. Initially, virus-like particles (VLPs) are composed of the structural unprocessed proteins Gag and Gag-Pol, and also contain the host initiator methionine tRNA (tRNA(i)-Met) which serves as a primer for minus-strand DNA synthesis, and a dimer of genomic Ty RNA. Processing of the polyproteins occurs within the particle and proceeds by an ordered pathway, called maturation. First, the protease (PR) is released by autocatalytic cleavage of the Gag-Pol polyprotein, and this cleavage is a prerequisite for subsequent processing at the remaining sites to release the mature structural and catalytic proteins. Maturation takes place prior to the RT reaction and is required to produce transposition-competent VLPs.

The protein localises to the cytoplasm. It is found in the nucleus. It catalyses the reaction DNA(n) + a 2'-deoxyribonucleoside 5'-triphosphate = DNA(n+1) + diphosphate. The catalysed reaction is Endonucleolytic cleavage to 5'-phosphomonoester.. Its function is as follows. Capsid protein (CA) is the structural component of the virus-like particle (VLP), forming the shell that encapsulates the retrotransposons dimeric RNA genome. The particles are assembled from trimer-clustered units and there are holes in the capsid shells that allow for the diffusion of macromolecules. CA also has nucleocapsid-like chaperone activity, promoting primer tRNA(i)-Met annealing to the multipartite primer-binding site (PBS), dimerization of Ty2 RNA and initiation of reverse transcription. In terms of biological role, the aspartyl protease (PR) mediates the proteolytic cleavages of the Gag and Gag-Pol polyproteins after assembly of the VLP. Functionally, reverse transcriptase/ribonuclease H (RT) is a multifunctional enzyme that catalyzes the conversion of the retro-elements RNA genome into dsDNA within the VLP. The enzyme displays a DNA polymerase activity that can copy either DNA or RNA templates, and a ribonuclease H (RNase H) activity that cleaves the RNA strand of RNA-DNA heteroduplexes during plus-strand synthesis and hydrolyzes RNA primers. The conversion leads to a linear dsDNA copy of the retrotransposon that includes long terminal repeats (LTRs) at both ends. Integrase (IN) targets the VLP to the nucleus, where a subparticle preintegration complex (PIC) containing at least integrase and the newly synthesized dsDNA copy of the retrotransposon must transit the nuclear membrane. Once in the nucleus, integrase performs the integration of the dsDNA into the host genome. This is Transposon Ty2-LR2 Gag-Pol polyprotein (TY2B-LR2) from Saccharomyces cerevisiae (strain ATCC 204508 / S288c) (Baker's yeast).